A 359-amino-acid chain; its full sequence is Protein HEXIM1 (359 aa).

The tract at residues 1–163 (MAEPFLSEYQ…RRRPSKKKRH (163 aa)) is disordered. Residues 9 to 19 (YQHQPQTSNCT) show a composition bias toward polar residues. Composition is skewed to basic and acidic residues over residues 34 to 47 (PGAEERVPEEDSRW) and 84 to 93 (CLREGEKGQN). Phosphoserine is present on residues S97 and S98. Residues 148–163 (LGKKKHRRRPSKKKRH) show a composition bias toward basic residues. Residues 150–177 (KKKHRRRPSKKKRHWKPYYKLTWEEKKK) form a basic region; mediates nuclear localization and interaction with 7SK snRNA and NR3C1 region. The interval 202–205 (PYNT) is interaction with P-TEFb. The segment at 210–250 (MDDHDQEEPDLKTGLYSKRAAAKSDDTSDDDFMEEGGEEDG) is autoinhibitory acidic region; in absence of 7SK snRNA interacts with the basic region preventing interaction with P-TEFb and modulating subcellular localization. The segment at 213-262 (HDQEEPDLKTGLYSKRAAAKSDDTSDDDFMEEGGEEDGGSDGMGGDGSEF) is disordered. S233 is subject to Phosphoserine. The residue at position 236 (T236) is a Phosphothreonine. Residues 236 to 251 (TSDDDFMEEGGEEDGG) show a composition bias toward acidic residues. Phosphoserine is present on residues S237, S252, and S260. Residues 283 to 349 (SKQELIKEYL…LTENELHRQQ (67 aa)) adopt a coiled-coil conformation. The tract at residues 286-314 (ELIKEYLELEKCLSRMEDENNRLRLESKR) is mediates interaction with CCNT1. The required for inhibition of ESR1-dependent transcription stretch occupies residues 310–355 (LESKRLGGDDARVRELELELDRLRAENLQLLTENELHRQQERAPLS).

It belongs to the HEXIM family. As to quaternary structure, homooligomer and heterooligomer with HEXIM2; probably dimeric. Core component of the 7SK RNP complex, at least composed of 7SK RNA, LARP7, MEPCE, HEXIM1 (or HEXIM2) and P-TEFb (composed of CDK9 and CCNT1/cyclin-T1). Interacts with the N-CoR complex through NCOR1. Interacts with ESR1 and NR3C1. May interact with NF-kappa-B through RELA. Interacts with CCNT2; mediates formation of a tripartite complex with KPNA2. Part of the HDP-RNP complex composed of at least HEXIM1, PRKDC, XRCC5, XRCC6, paraspeckle proteins (SFPQ, NONO, PSPC1, RBM14, and MATR3) and NEAT1 non-coding RNA. In terms of tissue distribution, ubiquitously expressed with higher expression in placenta. HEXIM1 and HEXIM2 are differentially expressed. Expressed in endocrine tissues.

The protein localises to the nucleus. It is found in the cytoplasm. Transcriptional regulator which functions as a general RNA polymerase II transcription inhibitor. Core component of the 7SK RNP complex: in cooperation with 7SK snRNA sequesters P-TEFb in a large inactive 7SK snRNP complex preventing RNA polymerase II phosphorylation and subsequent transcriptional elongation. May also regulate NF-kappa-B, ESR1, NR3C1 and CIITA-dependent transcriptional activity. Plays a role in the regulation of DNA virus-mediated innate immune response by assembling into the HDP-RNP complex, a complex that serves as a platform for IRF3 phosphorylation and subsequent innate immune response activation through the cGAS-STING pathway. This chain is Protein HEXIM1 (HEXIM1), found in Homo sapiens (Human).